A 411-amino-acid chain; its full sequence is Ornithine aminotransferase (411 aa).

Residue Lys257 is modified to N6-(pyridoxal phosphate)lysine.

Belongs to the class-III pyridoxal-phosphate-dependent aminotransferase family. OAT subfamily. Requires pyridoxal 5'-phosphate as cofactor.

Its subcellular location is the cytoplasm. It catalyses the reaction a 2-oxocarboxylate + L-ornithine = L-glutamate 5-semialdehyde + an L-alpha-amino acid. The protein operates within amino-acid biosynthesis; L-proline biosynthesis; L-glutamate 5-semialdehyde from L-ornithine: step 1/1. In terms of biological role, catalyzes the interconversion of ornithine to glutamate semialdehyde. The chain is Ornithine aminotransferase from Bordetella bronchiseptica (strain ATCC BAA-588 / NCTC 13252 / RB50) (Alcaligenes bronchisepticus).